The following is a 776-amino-acid chain: Lysyl oxidase homolog 2 (776 aa).

The N-terminal stretch at 1-25 (MEIPFGSCLYSCLALLVLLPSLSLA) is a signal peptide. SRCR domains lie at 61–162 (VRLA…VVCS), 191–305 (IRPI…VSCV), 329–428 (VRLR…VRCN), and 438–546 (VRLN…VACS). Disulfide bonds link Cys-87-Cys-151, Cys-100-Cys-161, Cys-131-Cys-141, Cys-221-Cys-294, Cys-234-Cys-304, Cys-268-Cys-278, Cys-354-Cys-417, Cys-367-Cys-427, and Cys-398-Cys-408. Asn-267 carries N-linked (GlcNAc...) asparagine glycosylation. An N-linked (GlcNAc...) asparagine glycan is attached at Asn-291. Residue Asn-458 is glycosylated (N-linked (GlcNAc...) asparagine). Cystine bridges form between Cys-467–Cys-532, Cys-480–Cys-545, and Cys-514–Cys-524. The tract at residues 550-753 (PDLVLNAEIV…WMYNCHVGGA (204 aa)) is lysyl-oxidase like. Residues Asp-551 and Leu-552 each contribute to the Ca(2+) site. Cystine bridges form between Cys-575–Cys-627, Cys-581–Cys-697, Cys-659–Cys-675, and Cys-665–Cys-687. Residues His-628, His-630, and His-632 each contribute to the Cu cation site. Asn-646 carries N-linked (GlcNAc...) asparagine glycosylation. The lysine tyrosylquinone (Lys-Tyr) cross-link spans 655-691 (KASFCLEDTECEGDIQKSYECANFGEQGITMGCWDMY). 2',4',5'-topaquinone is present on Tyr-691. Positions 724, 726, 729, and 730 each coordinate Ca(2+). Cys-734 and Cys-748 form a disulfide bridge.

Belongs to the lysyl oxidase family. As to quaternary structure, component of some chromatin repressor complex. Interacts with SNAI1. Interacts with TAF10. Interacts with HSPA5. Interacts with EFEMP2. The cofactor is Cu cation. Lysine tyrosylquinone residue is required as a cofactor. Post-translationally, the lysine tyrosylquinone cross-link (LTQ) is generated by condensation of the epsilon-amino group of a lysine with a topaquinone produced by oxidation of tyrosine. In terms of processing, N-glycosylated. N-glycosylation on Asn-458 and Asn-646 may be essential for proper folding and secretion; may be composed of a fucosylated carbohydrates attached to a trimannose N-linked glycan core.

The protein resides in the secreted. Its subcellular location is the extracellular space. The protein localises to the extracellular matrix. It is found in the basement membrane. It localises to the nucleus. The protein resides in the chromosome. Its subcellular location is the endoplasmic reticulum. It catalyses the reaction L-lysyl-[protein] + O2 + H2O = (S)-2-amino-6-oxohexanoyl-[protein] + H2O2 + NH4(+). Its activity is regulated as follows. Specifically inhibited by a mouse monoclonal antibody AB0023, inhibition occurs in a non-competitive manner. In terms of biological role, mediates the post-translational oxidative deamination of lysine residues on target proteins leading to the formation of deaminated lysine (allysine). Acts as a transcription corepressor and specifically mediates deamination of trimethylated 'Lys-4' of histone H3 (H3K4me3), a specific tag for epigenetic transcriptional activation. Shows no activity against histone H3 when it is trimethylated on 'Lys-9' (H3K9me3) or 'Lys-27' (H3K27me3) or when 'Lys-4' is monomethylated (H3K4me1) or dimethylated (H3K4me2). Also mediates deamination of methylated TAF10, a member of the transcription factor IID (TFIID) complex, which induces release of TAF10 from promoters, leading to inhibition of TFIID-dependent transcription. LOXL2-mediated deamination of TAF10 results in transcriptional repression of genes required for embryonic stem cell pluripotency including POU5F1/OCT4, NANOG, KLF4 and SOX2. Involved in epithelial to mesenchymal transition (EMT) via interaction with SNAI1 and participates in repression of E-cadherin CDH1, probably by mediating deamination of histone H3. During EMT, involved with SNAI1 in negatively regulating pericentromeric heterochromatin transcription. SNAI1 recruits LOXL2 to pericentromeric regions to oxidize histone H3 and repress transcription which leads to release of heterochromatin component CBX5/HP1A, enabling chromatin reorganization and acquisition of mesenchymal traits. Interacts with the endoplasmic reticulum protein HSPA5 which activates the IRE1-XBP1 pathway of the unfolded protein response, leading to expression of several transcription factors involved in EMT and subsequent EMT induction. When secreted into the extracellular matrix, promotes cross-linking of extracellular matrix proteins by mediating oxidative deamination of peptidyl lysine residues in precursors to fibrous collagen and elastin. Acts as a regulator of sprouting angiogenesis, probably via collagen IV scaffolding. Acts as a regulator of chondrocyte differentiation, probably by regulating expression of factors that control chondrocyte differentiation. This chain is Lysyl oxidase homolog 2 (Loxl2), found in Rattus norvegicus (Rat).